Reading from the N-terminus, the 534-residue chain is Cytochrome c oxidase subunit 1 (534 aa).

The Mitochondrial matrix segment spans residues methionine 1–isoleucine 14. A helical membrane pass occupies residues alanine 15–glutamate 39. Residues glutamate 39, alanine 42, and glycine 44 each coordinate Ca(2+). Topologically, residues leucine 40–leucine 54 are mitochondrial intermembrane. A helical transmembrane segment spans residues phenylalanine 55–isoleucine 88. Residue histidine 62 coordinates Fe(II)-heme a. At glycine 89 to arginine 97 the chain is on the mitochondrial matrix side. A helical membrane pass occupies residues isoleucine 98–leucine 118. The Mitochondrial intermembrane segment spans residues valine 119–proline 142. A helical transmembrane segment spans residues serine 143–asparagine 171. At methionine 172–proline 183 the chain is on the mitochondrial matrix side. Residues leucine 184–asparagine 215 traverse the membrane as a helical segment. At phenylalanine 216–aspartate 228 the chain is on the mitochondrial intermembrane side. Residues proline 229–serine 263 traverse the membrane as a helical segment. A Cu cation-binding site is contributed by histidine 241. The 1'-histidyl-3'-tyrosine (His-Tyr) cross-link spans histidine 241–tyrosine 245. Tyrosine 245 is an O2 binding site. The Mitochondrial matrix portion of the chain corresponds to lysine 264 to glycine 269. The chain crosses the membrane as a helical span at residues glutamate 270–valine 295. 2 residues coordinate Cu cation: histidine 290 and histidine 291. The Mitochondrial intermembrane segment spans residues glycine 296 to aspartate 298. The helical transmembrane segment at alanine 299 to isoleucine 327 threads the bilayer. Residues histidine 328–alanine 335 lie on the Mitochondrial matrix side of the membrane. The chain crosses the membrane as a helical span at residues threonine 336–leucine 358. At alanine 359–threonine 370 the chain is on the mitochondrial intermembrane side. Mg(2+) is bound by residues histidine 368 and aspartate 369. A helical membrane pass occupies residues tyrosine 371–isoleucine 400. Residue histidine 376 coordinates heme a3. Position 378 (histidine 378) interacts with Fe(II)-heme a. The Mitochondrial matrix segment spans residues leucine 401–asparagine 406. The chain crosses the membrane as a helical span at residues glutamate 407–leucine 431. Topologically, residues glycine 432–glycine 449 are mitochondrial intermembrane. Proline 441 contributes to the Ca(2+) binding site. The chain crosses the membrane as a helical span at residues tryptophan 450–aspartate 474. Residues glutamine 475–serine 534 lie on the Mitochondrial matrix side of the membrane.

The protein belongs to the heme-copper respiratory oxidase family. In terms of assembly, component of the cytochrome c oxidase (complex IV, CIV), a multisubunit enzyme composed of 12 subunits. The complex is composed of a catalytic core of 3 subunits COX1, COX2 and COX3, encoded in the mitochondrial DNA, and 9 supernumerary subunits COX4, COX5A (or COX5B), COX6, COX7, COX8, COX9, COX12, COX13 and COX26, which are encoded in the nuclear genome. The complex exists as a monomer or a dimer and forms supercomplexes (SCs) in the inner mitochondrial membrane with a dimer of ubiquinol-cytochrome c oxidoreductase (cytochrome b-c1 complex, complex III, CIII), resulting in 2 different assemblies (supercomplexes III(2)IV and III(2)IV(2)). Heme is required as a cofactor. The cofactor is Cu cation. The N-terminus is blocked.

The protein resides in the mitochondrion inner membrane. It catalyses the reaction 4 Fe(II)-[cytochrome c] + O2 + 8 H(+)(in) = 4 Fe(III)-[cytochrome c] + 2 H2O + 4 H(+)(out). It participates in energy metabolism; oxidative phosphorylation. Component of the cytochrome c oxidase, the last enzyme in the mitochondrial electron transport chain which drives oxidative phosphorylation. The respiratory chain contains 3 multisubunit complexes succinate dehydrogenase (complex II, CII), ubiquinol-cytochrome c oxidoreductase (cytochrome b-c1 complex, complex III, CIII) and cytochrome c oxidase (complex IV, CIV), that cooperate to transfer electrons derived from NADH and succinate to molecular oxygen, creating an electrochemical gradient over the inner membrane that drives transmembrane transport and the ATP synthase. Cytochrome c oxidase is the component of the respiratory chain that catalyzes the reduction of oxygen to water. Electrons originating from reduced cytochrome c in the intermembrane space (IMS) are transferred via the dinuclear copper A center (CU(A)) of COX2 and heme A of COX1 to the active site in COX1, a binuclear center (BNC) formed by heme A3 and copper B (CU(B)). The BNC reduces molecular oxygen to 2 water molecules using 4 electrons from cytochrome c in the IMS and 4 protons from the mitochondrial matrix. COX1 is a catalytic core subunit containing heme A and the active site BNC with heme A3 and the copper atom CU(B). The sequence is that of Cytochrome c oxidase subunit 1 (COX1) from Saccharomyces cerevisiae (strain ATCC 204508 / S288c) (Baker's yeast).